The chain runs to 170 residues: ATP synthase subunit b (170 aa).

The chain crosses the membrane as a helical span at residues 22–41 (VLNWAVVVFGLYKFLPGFLG).

This sequence belongs to the ATPase B chain family. As to quaternary structure, F-type ATPases have 2 components, F(1) - the catalytic core - and F(0) - the membrane proton channel. F(1) has five subunits: alpha(3), beta(3), gamma(1), delta(1), epsilon(1). F(0) has four main subunits: a(1), b(1), b'(1) and c(10-14). The alpha and beta chains form an alternating ring which encloses part of the gamma chain. F(1) is attached to F(0) by a central stalk formed by the gamma and epsilon chains, while a peripheral stalk is formed by the delta, b and b' chains.

The protein resides in the cellular thylakoid membrane. F(1)F(0) ATP synthase produces ATP from ADP in the presence of a proton or sodium gradient. F-type ATPases consist of two structural domains, F(1) containing the extramembraneous catalytic core and F(0) containing the membrane proton channel, linked together by a central stalk and a peripheral stalk. During catalysis, ATP synthesis in the catalytic domain of F(1) is coupled via a rotary mechanism of the central stalk subunits to proton translocation. Functionally, component of the F(0) channel, it forms part of the peripheral stalk, linking F(1) to F(0). The protein is ATP synthase subunit b of Prochlorococcus marinus subsp. pastoris (strain CCMP1986 / NIES-2087 / MED4).